Here is a 125-residue protein sequence, read N- to C-terminus: Protein ApaG (125 aa).

The ApaG domain occupies 1–125 (MINAPRVCVQ…FRLAIPSLIH (125 aa)).

This Pectobacterium atrosepticum (strain SCRI 1043 / ATCC BAA-672) (Erwinia carotovora subsp. atroseptica) protein is Protein ApaG.